Here is a 280-residue protein sequence, read N- to C-terminus: Urease accessory protein UreD (280 aa).

Belongs to the UreD family. As to quaternary structure, ureD, UreF and UreG form a complex that acts as a GTP-hydrolysis-dependent molecular chaperone, activating the urease apoprotein by helping to assemble the nickel containing metallocenter of UreC. The UreE protein probably delivers the nickel.

Its subcellular location is the cytoplasm. Required for maturation of urease via the functional incorporation of the urease nickel metallocenter. This chain is Urease accessory protein UreD, found in Staphylococcus saprophyticus subsp. saprophyticus (strain ATCC 15305 / DSM 20229 / NCIMB 8711 / NCTC 7292 / S-41).